The sequence spans 300 residues: Cation-efflux pump FieF (300 aa).

4 helical membrane passes run Ala-12–Trp-32, Ile-39–Val-59, Ala-82–Ile-102, and Pro-114–Phe-134. 2 residues coordinate Zn(2+): Asp-45 and Asp-49. Positions 153 and 157 each coordinate Zn(2+). 2 helical membrane passes run Ser-156–His-176 and Ala-178–Gly-198.

Belongs to the cation diffusion facilitator (CDF) transporter (TC 2.A.4) family. FieF subfamily. As to quaternary structure, homodimer.

It localises to the cell inner membrane. The catalysed reaction is Zn(2+)(in) + H(+)(out) = Zn(2+)(out) + H(+)(in). It catalyses the reaction Cd(2+)(in) + H(+)(out) = Cd(2+)(out) + H(+)(in). The enzyme catalyses Fe(2+)(in) + H(+)(out) = Fe(2+)(out) + H(+)(in). Divalent metal cation transporter which exports Zn(2+), Cd(2+) and possibly Fe(2+). May be involved in zinc and iron detoxification by efflux. In Salmonella arizonae (strain ATCC BAA-731 / CDC346-86 / RSK2980), this protein is Cation-efflux pump FieF.